Consider the following 637-residue polypeptide: Sodium-dependent proline transporter (637 aa).

Topologically, residues methionine 1–aspartate 45 are cytoplasmic. Residue threonine 20 is modified to Phosphothreonine. Serine 22 bears the Phosphoserine mark. A run of 3 helical transmembrane segments spans residues phenylalanine 46–arginine 66, alanine 74–leucine 93, and glycine 117–isoleucine 137. Topologically, residues alanine 138–arginine 214 are extracellular. Asparagine 182 carries an N-linked (GlcNAc...) asparagine glycan. Transmembrane regions (helical) follow at residues tryptophan 215 to leucine 233, valine 242 to valine 259, isoleucine 295 to tyrosine 312, phenylalanine 324 to leucine 345, leucine 378 to leucine 397, valine 425 to threonine 443, serine 459 to isoleucine 479, alanine 500 to valine 519, and leucine 538 to valine 556. At alanine 557–methionine 637 the chain is on the cytoplasmic side. Phosphoserine is present on residues serine 573 and serine 582. At threonine 588 the chain carries Phosphothreonine. Tyrosine 591 carries the phosphotyrosine modification. Serine 598 and serine 600 each carry phosphoserine.

The protein belongs to the sodium:neurotransmitter symporter (SNF) (TC 2.A.22) family. SLC6A7 subfamily.

Its subcellular location is the synaptic cell membrane. It catalyses the reaction L-proline(out) + chloride(out) + 2 Na(+)(out) = L-proline(in) + chloride(in) + 2 Na(+)(in). The enzyme catalyses L-pipecolate(out) + chloride(out) + 2 Na(+)(out) = L-pipecolate(in) + chloride(in) + 2 Na(+)(in). In terms of biological role, brain specific sodium (and chloride)-dependent proline transporter. Terminates the action of proline by its high affinity sodium-dependent reuptake into presynaptic terminals. In Mus musculus (Mouse), this protein is Sodium-dependent proline transporter.